Here is a 336-residue protein sequence, read N- to C-terminus: Vomeronasal type-1 receptor 102 (336 aa).

At 1–42 (MVGVQICQGMTSEILFFSLQPQFSNMMNKNSRLHIDSNIRNT) the chain is on the extracellular side. The helical transmembrane segment at 43 to 63 (FFTEIGIGVSANSLLLLFNIF) threads the bilayer. Over 64–75 (KFIHGQRSRLTD) the chain is Cytoplasmic. A helical membrane pass occupies residues 76–96 (LPIGLLSLINLLMLLIMACIA). Residues 97–120 (TDIFISCRRWDDIICKSLLYLYRT) are Extracellular-facing. A disulfide bridge connects residues Cys111 and Cys198. The helical transmembrane segment at 121–140 (FRGLSLSTTCLLSVLQAIIL) threads the bilayer. Over 141–157 (SPRSSCLAKYKHKPPHH) the chain is Cytoplasmic. The chain crosses the membrane as a helical span at residues 158 to 178 (IFCAMLFLSVLYMFISSHLLL). The Extracellular segment spans residues 179–213 (SIIATPNLTTNDFIHVSQSCSILPMSYLMQSMFST). Asn185 is a glycosylation site (N-linked (GlcNAc...) asparagine). The helical transmembrane segment at 214–234 (LLAIRNVFLISLIVLSTWYMV) threads the bilayer. The Cytoplasmic segment spans residues 235–264 (ALLCRHRKQTRHLQDTSLSRKASPEQRATR). The chain crosses the membrane as a helical span at residues 265-285 (SILMLRSLFVLMSIFDSIVSC). Over 286 to 296 (SRTMYLNDPTS) the chain is Extracellular. The helical transmembrane segment at 297–317 (YSIQLLVVHIYATVSPFVFMI) threads the bilayer. Residues 318–336 (TEKHIVNYLKSMYVRVLNV) are Cytoplasmic-facing.

Belongs to the G-protein coupled receptor 1 family. As to expression, expressed in 1-4% of neurons of the vomeronasal organ. Only one pheromone receptor gene may be expressed in a particular neuron. Not expressed in the main olfactory epithelium.

Its subcellular location is the cell membrane. Functionally, putative pheromone receptor implicated in the regulation of social as well as reproductive behavior. This Rattus norvegicus (Rat) protein is Vomeronasal type-1 receptor 102 (Vom1r102).